Consider the following 205-residue polypeptide: Holliday junction branch migration complex subunit RuvA (205 aa).

Positions 1-64 (MIGRLNGILV…EDAQLLFGFN (64 aa)) are domain I. The segment at 65 to 143 (NKVERALFRE…NWGNDLFTPF (79 aa)) is domain II. The tract at residues 144–156 (SDSAVIEPFSDAT) is flexible linker. Residues 157 to 205 (IANNAADDAVSALVSLGYKLPQAQKAVKSVSKPDMSTEVLIKESLKSML) form a domain III region.

This sequence belongs to the RuvA family. As to quaternary structure, homotetramer. Forms an RuvA(8)-RuvB(12)-Holliday junction (HJ) complex. HJ DNA is sandwiched between 2 RuvA tetramers; dsDNA enters through RuvA and exits via RuvB. An RuvB hexamer assembles on each DNA strand where it exits the tetramer. Each RuvB hexamer is contacted by two RuvA subunits (via domain III) on 2 adjacent RuvB subunits; this complex drives branch migration. In the full resolvosome a probable DNA-RuvA(4)-RuvB(12)-RuvC(2) complex forms which resolves the HJ.

The protein resides in the cytoplasm. Its function is as follows. The RuvA-RuvB-RuvC complex processes Holliday junction (HJ) DNA during genetic recombination and DNA repair, while the RuvA-RuvB complex plays an important role in the rescue of blocked DNA replication forks via replication fork reversal (RFR). RuvA specifically binds to HJ cruciform DNA, conferring on it an open structure. The RuvB hexamer acts as an ATP-dependent pump, pulling dsDNA into and through the RuvAB complex. HJ branch migration allows RuvC to scan DNA until it finds its consensus sequence, where it cleaves and resolves the cruciform DNA. The polypeptide is Holliday junction branch migration complex subunit RuvA (Pseudoalteromonas translucida (strain TAC 125)).